A 395-amino-acid polypeptide reads, in one-letter code: Elongation factor Tu (395 aa).

A tr-type G domain is found at 10 to 204 (KPHVNVGTIG…AVDEYIPEPT (195 aa)). The G1 stretch occupies residues 19 to 26 (GHVDHGKT). 19 to 26 (GHVDHGKT) contacts GTP. Thr-26 lines the Mg(2+) pocket. The interval 60–64 (GITIA) is G2. The G3 stretch occupies residues 81 to 84 (DCPG). Residues 81 to 85 (DCPGH) and 136 to 139 (NKVD) each bind GTP. The G4 stretch occupies residues 136–139 (NKVD). The interval 174–176 (SAL) is G5.

Belongs to the TRAFAC class translation factor GTPase superfamily. Classic translation factor GTPase family. EF-Tu/EF-1A subfamily. Monomer.

It localises to the cytoplasm. The catalysed reaction is GTP + H2O = GDP + phosphate + H(+). Functionally, GTP hydrolase that promotes the GTP-dependent binding of aminoacyl-tRNA to the A-site of ribosomes during protein biosynthesis. The protein is Elongation factor Tu of Exiguobacterium sibiricum (strain DSM 17290 / CCUG 55495 / CIP 109462 / JCM 13490 / 255-15).